The following is a 406-amino-acid chain: Succinylornithine transaminase (406 aa).

K252 is modified (N6-(pyridoxal phosphate)lysine).

It belongs to the class-III pyridoxal-phosphate-dependent aminotransferase family. AstC subfamily. The cofactor is pyridoxal 5'-phosphate.

It catalyses the reaction N(2)-succinyl-L-ornithine + 2-oxoglutarate = N-succinyl-L-glutamate 5-semialdehyde + L-glutamate. It functions in the pathway amino-acid degradation; L-arginine degradation via AST pathway; L-glutamate and succinate from L-arginine: step 3/5. In terms of biological role, catalyzes the transamination of N(2)-succinylornithine and alpha-ketoglutarate into N(2)-succinylglutamate semialdehyde and glutamate. Can also act as an acetylornithine aminotransferase. This Escherichia coli (strain 55989 / EAEC) protein is Succinylornithine transaminase.